Consider the following 195-residue polypeptide: GTP-dependent dephospho-CoA kinase (195 aa).

Asp49, Val50, Asp68, Glu127, and Asp150 together coordinate GTP.

This sequence belongs to the GTP-dependent DPCK family.

It catalyses the reaction 3'-dephospho-CoA + GTP = GDP + CoA + H(+). The protein operates within cofactor biosynthesis; coenzyme A biosynthesis. Catalyzes the GTP-dependent phosphorylation of the 3'-hydroxyl group of dephosphocoenzyme A to form coenzyme A (CoA). This chain is GTP-dependent dephospho-CoA kinase, found in Methanosarcina acetivorans (strain ATCC 35395 / DSM 2834 / JCM 12185 / C2A).